The primary structure comprises 37 residues: Lambda-hexatoxin-Hf1a (37 aa).

Intrachain disulfides connect cysteine 4–cysteine 18, cysteine 11–cysteine 23, cysteine 14–cysteine 15, and cysteine 17–cysteine 34.

This sequence belongs to the neurotoxin 11 (kappa toxin) family. Expressed by the venom gland.

It localises to the secreted. Its function is as follows. This excitatory toxin inhibits insect calcium-activated potassium (KCa) channels (Slo-type). The chain is Lambda-hexatoxin-Hf1a from Hadronyche formidabilis (Northern tree funnel-web spider).